The primary structure comprises 437 residues: FK506-binding protein 3 (437 aa).

3 stretches are compositionally biased toward acidic residues: residues 73 to 90 (DIEAEEADELDSEEEEEE), 106 to 131 (EEEEDEDEEDLDIDGSSDEEDDEDVS), and 179 to 220 (ADED…DASD). Disordered regions lie at residues 73 to 132 (DIEA…DVSE) and 169 to 349 (HLTG…QTAK). 2 stretches are compositionally biased toward basic and acidic residues: residues 256 to 270 (KKEDKKSVQFTKDLE) and 292 to 324 (AKKEEPKKEEPKKEQPKKEQPKKEQPKKEEASK). In terms of domain architecture, PPIase FKBP-type spans 351-437 (GNKVGIRYIG…TFDIKLVSIK (87 aa)).

It belongs to the FKBP-type PPIase family. FKBP3/4 subfamily.

The protein localises to the nucleus. It localises to the nucleolus. It catalyses the reaction [protein]-peptidylproline (omega=180) = [protein]-peptidylproline (omega=0). Inhibited by both FK506 and rapamycin. Functionally, PPIases accelerate the folding of proteins. It catalyzes the cis-trans isomerization of proline imidic peptide bonds in oligopeptides. This Debaryomyces hansenii (strain ATCC 36239 / CBS 767 / BCRC 21394 / JCM 1990 / NBRC 0083 / IGC 2968) (Yeast) protein is FK506-binding protein 3 (FPR3).